Reading from the N-terminus, the 248-residue chain is tRNA (guanine-N(1)-)-methyltransferase (248 aa).

S-adenosyl-L-methionine-binding positions include glycine 113 and 133–138 (IGDYVL).

Belongs to the RNA methyltransferase TrmD family. In terms of assembly, homodimer.

The protein localises to the cytoplasm. The catalysed reaction is guanosine(37) in tRNA + S-adenosyl-L-methionine = N(1)-methylguanosine(37) in tRNA + S-adenosyl-L-homocysteine + H(+). Functionally, specifically methylates guanosine-37 in various tRNAs. The protein is tRNA (guanine-N(1)-)-methyltransferase of Shewanella baltica (strain OS223).